The sequence spans 189 residues: Interferon alpha-D (189 aa).

An N-terminal signal peptide occupies residues 1–23 (MAPAWSLLLALLLLSCNAICSLG). Cystine bridges form between C24-C122 and C52-C162.

This sequence belongs to the alpha/beta interferon family.

Its subcellular location is the secreted. Its function is as follows. Produced by macrophages, IFN-alpha have antiviral activities. Interferon stimulates the production of two enzymes: a protein kinase and an oligoadenylate synthetase. The protein is Interferon alpha-D (IFNAD) of Bos taurus (Bovine).